A 487-amino-acid chain; its full sequence is Zinc finger and BTB domain-containing protein 32 (487 aa).

One can recognise a BTB domain in the interval 29-87 (CDTLITVGSQEFPAHSLVLAGVSQQLGRRGQWALGEGISPSTFAQLLNFVYGESVELQP). The span at 112–166 (ARGDRAKKPDPGLKKHQEEPEKPSRNPERELGDPGEKQKPEQVSRTGGREQEMLH) shows a compositional bias: basic and acidic residues. 2 disordered regions span residues 112–244 (ARGD…TSVT) and 308–371 (QNQL…ARSR). Residues 308–320 (QNQLASSSPTPGS) show a composition bias toward polar residues. Residues 357-369 (PPRPHPPPAPPAR) show a composition bias toward pro residues. 3 consecutive C2H2-type zinc fingers follow at residues 373–395 (YACS…YRVH), 401–423 (FSCS…LRTH), and 428–450 (YRCS…MRGH). Positions 468 to 487 (SSSRPSRPSTSPCCPSSSTT) are disordered.

The protein belongs to the krueppel C2H2-type zinc-finger protein family. As to quaternary structure, homodimer (via PTB domain). Interacts with the N-terminal of FANCC. Interacts with ZBTB16. Interacts with GATA3. As to expression, predominantly expressed in testis. Some isoforms are ubiquitously expressed.

Its subcellular location is the nucleus. In terms of biological role, DNA-binding protein that binds to the to a 5'-TGTACAGTGT-3' core sequence. May function as a transcriptional transactivator and transcriptional repressor. Probably exerts its repressor effect by preventing GATA3 from binding to DNA. May play a role in regulating the differentiation and activation of helper T-cells. This is Zinc finger and BTB domain-containing protein 32 (ZBTB32) from Homo sapiens (Human).